A 218-amino-acid chain; its full sequence is Cytochrome b6 (218 aa).

A helical transmembrane segment spans residues 35 to 55; the sequence is IFYCLGGITLVCFLIQFATGF. Cysteine 38 provides a ligand contact to heme c. Heme b-binding residues include histidine 89 and histidine 103. Transmembrane regions (helical) follow at residues 93–113, 119–139, and 189–209; these read ASMM…TGGF, LTWV…VTGY, and LHTF…FLMI. The heme b site is built by histidine 190 and histidine 205.

This sequence belongs to the cytochrome b family. PetB subfamily. In terms of assembly, the 4 large subunits of the cytochrome b6-f complex are cytochrome b6, subunit IV (17 kDa polypeptide, PetD), cytochrome f and the Rieske protein, while the 4 small subunits are PetG, PetL, PetM and PetN. The complex functions as a dimer. The cofactor is heme b. It depends on heme c as a cofactor.

Its subcellular location is the cellular thylakoid membrane. Functionally, component of the cytochrome b6-f complex, which mediates electron transfer between photosystem II (PSII) and photosystem I (PSI), cyclic electron flow around PSI, and state transitions. This Prochlorococcus marinus (strain SARG / CCMP1375 / SS120) protein is Cytochrome b6.